Here is a 281-residue protein sequence, read N- to C-terminus: CDAN1-interacting nuclease 1 (281 aa).

The protein localises to the nucleus. It localises to the cytoplasm. Functionally, plays a role in erythroid cell differentiation. In Bos taurus (Bovine), this protein is CDAN1-interacting nuclease 1 (CDIN1).